The sequence spans 543 residues: Glutamyl-tRNA(Gln) amidotransferase subunit B-1, chloroplastic/mitochondrial (543 aa).

The tract at residues 1–47 (MIRAGGPSPSPRGRRAGPIRLPRRAPSSTPTRAKTEEKASADASSRT) is disordered. Basic residues predominate over residues 12–23 (RGRRAGPIRLPR).

The protein belongs to the GatB/GatE family. GatB subfamily. Subunit of the heterotrimeric GatCAB amidotransferase (AdT) complex, composed of A, B and C subunits.

The protein localises to the mitochondrion. Its subcellular location is the plastid. It localises to the chloroplast. The enzyme catalyses L-glutamyl-tRNA(Gln) + L-glutamine + ATP + H2O = L-glutaminyl-tRNA(Gln) + L-glutamate + ADP + phosphate + H(+). Its function is as follows. Allows the formation of correctly charged Gln-tRNA(Gln) through the transamidation of misacylated Glu-tRNA(Gln) in chloroplasts and mitochondria. The reaction takes place in the presence of glutamine and ATP through an activated gamma-phospho-Glu-tRNA(Gln). The sequence is that of Glutamyl-tRNA(Gln) amidotransferase subunit B-1, chloroplastic/mitochondrial from Micromonas commoda (strain RCC299 / NOUM17 / CCMP2709) (Picoplanktonic green alga).